The primary structure comprises 343 residues: Cytoplasmic tRNA 2-thiolation protein 1 (343 aa).

The protein belongs to the TtcA family. CTU1/NCS6/ATPBD3 subfamily.

The protein localises to the cytoplasm. Its pathway is tRNA modification; 5-methoxycarbonylmethyl-2-thiouridine-tRNA biosynthesis. Plays a central role in 2-thiolation of mcm(5)S(2)U at tRNA wobble positions of tRNA(Lys), tRNA(Glu) and tRNA(Gln). Directly binds tRNAs and probably acts by catalyzing adenylation of tRNAs, an intermediate required for 2-thiolation. It is unclear whether it acts as a sulfurtransferase that transfers sulfur from thiocarboxylated URM1 onto the uridine of tRNAs at wobble position. In Drosophila mojavensis (Fruit fly), this protein is Cytoplasmic tRNA 2-thiolation protein 1.